The primary structure comprises 39 residues: Mu-like prophage FluMu protein com (39 aa).

It belongs to the com family.

The chain is Mu-like prophage FluMu protein com from Haemophilus influenzae (strain ATCC 51907 / DSM 11121 / KW20 / Rd).